A 249-amino-acid polypeptide reads, in one-letter code: tRNA pseudouridine synthase A (249 aa).

The active-site Nucleophile is the D52. Residue Y111 participates in substrate binding.

Belongs to the tRNA pseudouridine synthase TruA family. As to quaternary structure, homodimer.

The enzyme catalyses uridine(38/39/40) in tRNA = pseudouridine(38/39/40) in tRNA. In terms of biological role, formation of pseudouridine at positions 38, 39 and 40 in the anticodon stem and loop of transfer RNAs. The chain is tRNA pseudouridine synthase A from Brachyspira hyodysenteriae (strain ATCC 49526 / WA1).